The following is a 203-amino-acid chain: Holliday junction branch migration complex subunit RuvA (203 aa).

The segment at 1–63 is domain I; the sequence is MIAFVSGPVA…EDSLTLYGFV (63 aa). A domain II region spans residues 64–141; the sequence is DDDERQVFEL…GEPLGTGGPA (78 aa). The tract at residues 141-145 is flexible linker; that stretch reads AIGRA. The domain III stretch occupies residues 146–203; sequence VTTGWREQLHAALIGLGYATREADEAVAAVAPQAEAAGGTPQVGQLLKAALQTLNRTR.

Belongs to the RuvA family. In terms of assembly, homotetramer. Forms an RuvA(8)-RuvB(12)-Holliday junction (HJ) complex. HJ DNA is sandwiched between 2 RuvA tetramers; dsDNA enters through RuvA and exits via RuvB. An RuvB hexamer assembles on each DNA strand where it exits the tetramer. Each RuvB hexamer is contacted by two RuvA subunits (via domain III) on 2 adjacent RuvB subunits; this complex drives branch migration. In the full resolvosome a probable DNA-RuvA(4)-RuvB(12)-RuvC(2) complex forms which resolves the HJ.

The protein resides in the cytoplasm. The RuvA-RuvB-RuvC complex processes Holliday junction (HJ) DNA during genetic recombination and DNA repair, while the RuvA-RuvB complex plays an important role in the rescue of blocked DNA replication forks via replication fork reversal (RFR). RuvA specifically binds to HJ cruciform DNA, conferring on it an open structure. The RuvB hexamer acts as an ATP-dependent pump, pulling dsDNA into and through the RuvAB complex. HJ branch migration allows RuvC to scan DNA until it finds its consensus sequence, where it cleaves and resolves the cruciform DNA. In Streptomyces avermitilis (strain ATCC 31267 / DSM 46492 / JCM 5070 / NBRC 14893 / NCIMB 12804 / NRRL 8165 / MA-4680), this protein is Holliday junction branch migration complex subunit RuvA.